Reading from the N-terminus, the 318-residue chain is Transaldolase (318 aa).

K132 functions as the Schiff-base intermediate with substrate in the catalytic mechanism.

Belongs to the transaldolase family. Type 1 subfamily. As to quaternary structure, homodimer.

It is found in the cytoplasm. The enzyme catalyses D-sedoheptulose 7-phosphate + D-glyceraldehyde 3-phosphate = D-erythrose 4-phosphate + beta-D-fructose 6-phosphate. The protein operates within carbohydrate degradation; pentose phosphate pathway; D-glyceraldehyde 3-phosphate and beta-D-fructose 6-phosphate from D-ribose 5-phosphate and D-xylulose 5-phosphate (non-oxidative stage): step 2/3. Transaldolase is important for the balance of metabolites in the pentose-phosphate pathway. The chain is Transaldolase from Shewanella baltica (strain OS185).